The chain runs to 546 residues: Chaperonin GroEL 5 (546 aa).

ATP is bound by residues 30 to 33 (TLGP), Lys51, 87 to 91 (DGTTT), Gly415, and Asp495.

The protein belongs to the chaperonin (HSP60) family. As to quaternary structure, forms a cylinder of 14 subunits composed of two heptameric rings stacked back-to-back. Interacts with the co-chaperonin GroES.

It is found in the cytoplasm. The catalysed reaction is ATP + H2O + a folded polypeptide = ADP + phosphate + an unfolded polypeptide.. Together with its co-chaperonin GroES, plays an essential role in assisting protein folding. The GroEL-GroES system forms a nano-cage that allows encapsulation of the non-native substrate proteins and provides a physical environment optimized to promote and accelerate protein folding. The protein is Chaperonin GroEL 5 of Paraburkholderia xenovorans (strain LB400).